The sequence spans 210 residues: uncharacterized protein (210 aa).

Transmembrane regions (helical) follow at residues 9 to 29, 35 to 55, 64 to 84, 91 to 111, 149 to 169, and 190 to 210; these read WVVTGLFVLTAAECGLAIIAK, LIVNHGLHFAMAVAMAVMAWP, GPAVFFLLAAVWFGATAVVAV, GLYGYHGLMMLATAWMYAAMN, IWFSAVNWIGTVGFAVAAVFW, and IGQAMMAAGMAMLFFAMLFPV.

The protein resides in the cell membrane. This is an uncharacterized protein from Mycobacterium bovis (strain ATCC BAA-935 / AF2122/97).